The primary structure comprises 434 residues: Serine hydroxymethyltransferase (434 aa).

(6S)-5,6,7,8-tetrahydrofolate-binding positions include Leu133 and 137 to 139; that span reads GHL. Position 242 is an N6-(pyridoxal phosphate)lysine (Lys242).

It belongs to the SHMT family. As to quaternary structure, homodimer. Pyridoxal 5'-phosphate serves as cofactor.

The protein localises to the cytoplasm. The catalysed reaction is (6R)-5,10-methylene-5,6,7,8-tetrahydrofolate + glycine + H2O = (6S)-5,6,7,8-tetrahydrofolate + L-serine. It functions in the pathway one-carbon metabolism; tetrahydrofolate interconversion. The protein operates within amino-acid biosynthesis; glycine biosynthesis; glycine from L-serine: step 1/1. Its function is as follows. Catalyzes the reversible interconversion of serine and glycine with tetrahydrofolate (THF) serving as the one-carbon carrier. This reaction serves as the major source of one-carbon groups required for the biosynthesis of purines, thymidylate, methionine, and other important biomolecules. Also exhibits THF-independent aldolase activity toward beta-hydroxyamino acids, producing glycine and aldehydes, via a retro-aldol mechanism. This is Serine hydroxymethyltransferase from Hyphomicrobium methylovorum.